Here is a 491-residue protein sequence, read N- to C-terminus: Glutamyl-tRNA(Gln) amidotransferase subunit A (491 aa).

S158 (charge relay system) is an active-site residue. Catalysis depends on S182, which acts as the Acyl-ester intermediate.

The protein belongs to the amidase family. GatA subfamily. As to quaternary structure, heterotrimer of A, B and C subunits.

The catalysed reaction is L-glutamyl-tRNA(Gln) + L-glutamine + ATP + H2O = L-glutaminyl-tRNA(Gln) + L-glutamate + ADP + phosphate + H(+). Allows the formation of correctly charged Gln-tRNA(Gln) through the transamidation of misacylated Glu-tRNA(Gln) in organisms which lack glutaminyl-tRNA synthetase. The reaction takes place in the presence of glutamine and ATP through an activated gamma-phospho-Glu-tRNA(Gln). This is Glutamyl-tRNA(Gln) amidotransferase subunit A from Bradyrhizobium diazoefficiens (strain JCM 10833 / BCRC 13528 / IAM 13628 / NBRC 14792 / USDA 110).